The primary structure comprises 126 residues: Large ribosomal subunit protein bL17 (126 aa).

Belongs to the bacterial ribosomal protein bL17 family. Part of the 50S ribosomal subunit. Contacts protein L32.

This Rickettsia felis (strain ATCC VR-1525 / URRWXCal2) (Rickettsia azadi) protein is Large ribosomal subunit protein bL17.